Reading from the N-terminus, the 103-residue chain is Large ribosomal subunit protein bL21 (103 aa).

It belongs to the bacterial ribosomal protein bL21 family. As to quaternary structure, part of the 50S ribosomal subunit. Contacts protein L20.

This protein binds to 23S rRNA in the presence of protein L20. In Shewanella frigidimarina (strain NCIMB 400), this protein is Large ribosomal subunit protein bL21.